The chain runs to 767 residues: Cadherin-5 (767 aa).

The N-terminal stretch at 1-29 (MMKQCARRQMTEPVFRVAVLLALCSLSIG) is a signal peptide. Positions 30-51 (VDVHQAQKTPSISSAALQRHKR) are excised as a propeptide. At 30 to 593 (VDVHQAQKTP…SYARTGMSVS (564 aa)) the chain is on the extracellular side. 4 residues coordinate Ca(2+): glutamate 62, glutamate 63, aspartate 113, and glutamate 115. 5 Cadherin domains span residues 86 to 155 (RYIL…IPVF), 155 to 261 (FDSD…IATF), 262 to 373 (KKER…PPIF), 374 to 475 (NQTE…APEL), and 475 to 581 (LTNG…RVEY). An N-linked (GlcNAc...) asparagine glycan is attached at asparagine 121. Ca(2+) is bound by residues aspartate 147, isoleucine 148, asparagine 149, aspartate 150, asparagine 151, aspartate 180, and aspartate 182. Residue asparagine 197 is glycosylated (N-linked (GlcNAc...) asparagine). Aspartate 233 contacts Ca(2+). N-linked (GlcNAc...) asparagine glycans are attached at residues asparagine 374, asparagine 477, and asparagine 518. The chain crosses the membrane as a helical span at residues 594–614 (ALLAILLCIITILVIVILIVL). Residues 615–767 (RRRYQKEVLV…VDGSDSDSSY (153 aa)) are Cytoplasmic-facing.

It is found in the cell membrane. The protein resides in the cell junction. Its subcellular location is the adherens junction. Functionally, cadherins are calcium-dependent cell adhesion proteins. They preferentially interact with themselves in a homophilic manner in connecting cells; cadherins may thus contribute to the sorting of heterogeneous cell types. Required for embryonic cardiac looping and heart chamber development, via promotion of cell-cell junction formation and subsequent attachment between the endothelial and myocardial layers of the heart. Required for the directional migration and delamination of endothelial cell monolayers, by which common cardinal veins form via the lumen ensheathment mechanism of vessel development as they migrate and connect with the heart inflow tract. Required for the formation of filopodia extensions (sprouts) at the initiation of intersegmental vessel development, by acting (via its C-terminus) to facilitate anchoring of the actin cytoskeleton to cell junctions in endothelial cells. Then positively regulates dorsal migration of stalk cells and sprout outgrowth towards the dorsal longitudinal anastomotic vessels (DLAV) via endothelial cell elongation. Following contact with the DLAV, required for intersegmental vessel lumen formation, potentially via facilitating the formation and/or extension of endothelial cell tight junctions that are required during tubulogenesis. In Danio rerio (Zebrafish), this protein is Cadherin-5.